The sequence spans 156 residues: Ribonuclease H (156 aa).

Residues 1 to 142 (MGKQVEIFTD…CDELARAAAN (142 aa)) form the RNase H type-1 domain. 4 residues coordinate Mg(2+): Asp-10, Glu-48, Asp-70, and Asp-134.

The protein belongs to the RNase H family. As to quaternary structure, monomer. Mg(2+) is required as a cofactor.

The protein localises to the cytoplasm. It carries out the reaction Endonucleolytic cleavage to 5'-phosphomonoester.. Its function is as follows. Endonuclease that specifically degrades the RNA of RNA-DNA hybrids. The sequence is that of Ribonuclease H from Photorhabdus laumondii subsp. laumondii (strain DSM 15139 / CIP 105565 / TT01) (Photorhabdus luminescens subsp. laumondii).